A 159-amino-acid polypeptide reads, in one-letter code: Dihydrofolate reductase (159 aa).

One can recognise a DHFR domain in the interval 1–158 (MISLIAALAV…HSYCFEILER (158 aa)). Ile5 contacts substrate. NADP(+) contacts are provided by residues Ala7 and 13–19 (VIGMENA). Asp27 serves as a coordination point for substrate. 45–46 (LT) contributes to the NADP(+) binding site. Substrate contacts are provided by Arg52 and Arg57. NADP(+)-binding positions include 63–64 (SS), Lys76, and 95–102 (GGGRVYEQ). Thr113 lines the substrate pocket.

This sequence belongs to the dihydrofolate reductase family.

It catalyses the reaction (6S)-5,6,7,8-tetrahydrofolate + NADP(+) = 7,8-dihydrofolate + NADPH + H(+). It participates in cofactor biosynthesis; tetrahydrofolate biosynthesis; 5,6,7,8-tetrahydrofolate from 7,8-dihydrofolate: step 1/1. Functionally, key enzyme in folate metabolism. Catalyzes an essential reaction for de novo glycine and purine synthesis, and for DNA precursor synthesis. The sequence is that of Dihydrofolate reductase (folA) from Klebsiella aerogenes (Enterobacter aerogenes).